Consider the following 413-residue polypeptide: Cardiolipin synthase B (413 aa).

PLD phosphodiesterase domains follow at residues 108–135 (VFRR…SAEH) and 285–312 (RRRP…DPLS). Active-site residues include His113, Lys115, Asp120, His290, Lys292, and Asp297. The interval 390 to 413 (VGPPAQPTMETQDRVETENTGVKP) is disordered.

The protein belongs to the phospholipase D family. Cardiolipin synthase subfamily. ClsB sub-subfamily.

It is found in the cell membrane. It catalyses the reaction 2 a 1,2-diacyl-sn-glycero-3-phospho-(1'-sn-glycerol) = a cardiolipin + glycerol. Catalyzes the phosphatidyl group transfer from one phosphatidylglycerol molecule to another to form cardiolipin (CL) (diphosphatidylglycerol) and glycerol. The sequence is that of Cardiolipin synthase B from Escherichia coli O6:H1 (strain CFT073 / ATCC 700928 / UPEC).